Consider the following 207-residue polypeptide: MANIDLKAEKGQEQLNELLANKSYLQGYEPSQEDVAAFNQLNKAPSDKFPYLLRWYKHISSFSDAEKKGFPGIPTSASKEEDDDVDLFGSDEEDEEAEKIKAERMKAYSDKKSKKPAIVAKSSVILDIKPWDDETDMAEMEKLVRSVQMDGLVWGAAKLIPLAYGIKKLSIMCVVEDDKVSIDELQEKISEFEDFVQSVDIAAFNKV.

At alanine 2 the chain carries N-acetylalanine. Positions 70–96 are disordered; the sequence is FPGIPTSASKEEDDDVDLFGSDEEDEE. A compositionally biased stretch (acidic residues) spans 80 to 96; sequence EEDDDVDLFGSDEEDEE. Serine 90 carries the post-translational modification Phosphoserine; by CK2.

This sequence belongs to the EF-1-beta/EF-1-delta family. As to quaternary structure, EF-1 is composed of 4 subunits: alpha, beta, delta, and gamma. In terms of processing, phosphorylation affects the GDP/GTP exchange rate.

EF-1-beta and EF-1-delta stimulate the exchange of GDP bound to EF-1-alpha to GTP. The polypeptide is Elongation factor 1-beta (Artemia salina (Brine shrimp)).